The primary structure comprises 1042 residues: Elongation factor 3 (1042 aa).

HEAT repeat units follow at residues 9–46 (KVLMDLIPKLKISMQETDKNEVIKNSEQHSSVSWDPDT), 86–124 (PYLVRLLPRVLKQVGLEKVAAVRTQASTVAEDIIKTMNP), 167–204 (YRLPELIPILSESMWDTRTDIKNQARKTMTSVCTLISN), 206–242 (DIDKFIPVLIDCIAQPEKVPETIHTLGATTFVQEVHA), 243–280 (STLSIMVPLLYRGLNERETTIKRKSAVIIDNMCKLVED), and 289–327 (PKLIPTLEHIKETIGDPECRSVVNRSLATLIRVGNVKEG). ABC transporter domains lie at 425–642 (EEGE…YQDI) and 668–994 (CRMR…EQEE). Positions 704, 923, 926, and 952 each coordinate ADP. The tract at residues 1009–1042 (KKAKKLTSSELRKKKKERMARRKKGEEVFSDEDD) is disordered. Basic residues predominate over residues 1020-1031 (RKKKKERMARRK).

The protein belongs to the ABC transporter superfamily. ABCF family. EF3 subfamily. Monomer.

The protein localises to the cytoplasm. The enzyme catalyses ATP + H2O = ADP + phosphate + H(+). The protein operates within protein biosynthesis; polypeptide chain elongation. In terms of biological role, ribosome-dependent ATPase that functions in cytoplasmic translation elongation. Required for the ATP-dependent release of deacylated tRNA from the ribosomal E-site during protein biosynthesis. Stimulates the eEF1A-dependent binding of aminoacyl-tRNA to the ribosomal A-site, which has reduced affinity for tRNA as long as the E-site is occupied. Assists translation termination by stimulating the release of nascent protein from the ribosome by release factors. In Pneumocystis carinii, this protein is Elongation factor 3 (TEF3).